Here is a 207-residue protein sequence, read N- to C-terminus: Large ribosomal subunit protein bL25 (207 aa).

It belongs to the bacterial ribosomal protein bL25 family. CTC subfamily. Part of the 50S ribosomal subunit; part of the 5S rRNA/L5/L18/L25 subcomplex. Contacts the 5S rRNA. Binds to the 5S rRNA independently of L5 and L18.

Functionally, this is one of the proteins that binds to the 5S RNA in the ribosome where it forms part of the central protuberance. This chain is Large ribosomal subunit protein bL25, found in Dictyoglomus turgidum (strain DSM 6724 / Z-1310).